Here is a 157-residue protein sequence, read N- to C-terminus: Hydra actinoporin-like toxin 3 (157 aa).

The first 14 residues, 1-14 (LEATVSRNKKYKFT), serve as a signal peptide directing secretion. The short motif at 129–131 (IAG) is the Cell attachment site element.

The protein belongs to the actinoporin family. HALT subfamily. Octamer or nonamer in membranes. Monomer in the soluble state. In vitro, interacts with folate receptor alpha (of target organism).

The protein resides in the nematocyst. The protein localises to the secreted. Its subcellular location is the target cell membrane. Functionally, pore-forming protein that forms hydrophilic pores and causes cytolysis. Compared to equinatoxin-2 (AC P61914), it reveals lower cytolysis activity (5-12-fold difference, tested on erythrocytes), a larger pore size (probably 2-3 nm) and different affinity to membrane lipids (100-fold lower affinity to sphingomyelin). Binds to the two sphingolipids, lysophosphatidic acid (LPA) and sphingosine-1-phosphate (S1P). Does not bind (or only weakly) to sulfatides (SFT). Shows cytolytic activity on HeLa cells, with a different potency than its paralogs (from most potent to less potent: HALT-4&gt;HALT-6~HALT-1&gt;HALT-3&gt;HALT-7&gt;HALT-2). Pore formation is a multi-step process that involves specific recognition of membrane lipid by a protein aromatic residues rich region, firm binding to the membrane (mainly driven by hydrophobic interactions) accompanied by the transfer of the N-terminal region to the lipid-water interface and finally pore formation after oligomerization of monomers. In vitro, binds to the folate receptor alpha (FOLR1), a GPI-anchored membrane protein that plays a major role in the uptake of folate/folic acid into cells via endocytosis, suggesting a possible involvement of this receptor in the mechanism of HALT-1-induced cell lysis. In vivo, does not cause visible paralysis in larvae of the blowfly Sarcophaga faculata, the most common arthropod prey of Hydra. This chain is Hydra actinoporin-like toxin 3, found in Hydra vulgaris (Hydra).